The chain runs to 407 residues: Tyrosine--tRNA ligase (407 aa).

Tyrosine 35 serves as a coordination point for L-tyrosine. The 'HIGH' region motif lies at 40–49 (PTADSLHVGH). L-tyrosine-binding residues include tyrosine 168 and glutamine 172. Residues 228–232 (KMGKT) carry the 'KMSKS' region motif. An ATP-binding site is contributed by lysine 231. Residues 341 to 405 (NLLVDLLVKC…RGKKNFNRIV (65 aa)) form the S4 RNA-binding domain.

The protein belongs to the class-I aminoacyl-tRNA synthetase family. TyrS type 1 subfamily. Homodimer.

It is found in the cytoplasm. It carries out the reaction tRNA(Tyr) + L-tyrosine + ATP = L-tyrosyl-tRNA(Tyr) + AMP + diphosphate + H(+). Functionally, catalyzes the attachment of tyrosine to tRNA(Tyr) in a two-step reaction: tyrosine is first activated by ATP to form Tyr-AMP and then transferred to the acceptor end of tRNA(Tyr). This Clostridium botulinum (strain Kyoto / Type A2) protein is Tyrosine--tRNA ligase.